A 131-amino-acid polypeptide reads, in one-letter code: Sulfurtransferase TusD (131 aa).

Residue cysteine 81 is the Cysteine persulfide intermediate of the active site.

This sequence belongs to the DsrE/TusD family. Heterohexamer, formed by a dimer of trimers. The hexameric TusBCD complex contains 2 copies each of TusB, TusC and TusD. The TusBCD complex interacts with TusE.

Its subcellular location is the cytoplasm. In terms of biological role, part of a sulfur-relay system required for 2-thiolation of 5-methylaminomethyl-2-thiouridine (mnm(5)s(2)U) at tRNA wobble positions. Accepts sulfur from TusA and transfers it in turn to TusE. The protein is Sulfurtransferase TusD of Photorhabdus laumondii subsp. laumondii (strain DSM 15139 / CIP 105565 / TT01) (Photorhabdus luminescens subsp. laumondii).